An 845-amino-acid chain; its full sequence is MVEGKGFLVSSVTELHRKEKQKKKGKSGGFESLNLGPNVFNAIKKKGYKVPTPIQRKTMPLILSGVDVVAMARTGSGKTAAFLIPMLEKLKQHVPQGGVRALILSPTRDLAEQTLKFTKELGKFTDLRVSLLVGGDSMEDQFEELTKGPDVIIATPGRLMHLLSEVDDMTLRTVEYVVFDEADSLFGMGFAEQLHQILTQLSENRQTLLFSATLPSALAEFAKAGLREPQLVRLDVENKISPDLKLSFLTVRPEEKYSALLYLVREHISSDQQTLIFVSTKHHVEFVNSLFKLENIEPSVCYGDMDQDARKIHVSRFRARKTMLLIVTDIAARGIDIPLLDNVINWDFPPRPKIFVHRVGRAARAGRTGCAYSFVTPEDMPYMLDLHLFLSKPVRPAPTEDEVLKNMEEVMTKTSQAIDSGVTVYGRFPQKTIDLIFNRTREMIDSSAELDSLERTSTKAFRLYSKTKPSPSKESIRRAKDLPREGLHPIFRSIIETGELEAMSFFQKIKNFRPKQTILEAEGEVAKSKHVKGPAGQWVDVMKKKRAIHEEIINTRHQQNQKTSNNHLEMEAEPTTSFVDGTVEGSKVSGKKRKAQETFKDDEFFISSIPVNHHSEAGLSLRGNEGFGSNRLDAAVLDLVADDGQGIKQQQSNYHWDKKGKKYIKLNNGDRVTASGKIKTESGAKATAKKTGIYKRWQERSHKKVSRDSGDADETTRMSGRGGRDGKRRQGSVPNAHVRSEIKDLDQVRKERQQKANKVSYLQSKRGGRGGRGGARGGRGGGARGGRGGSRDFGGGGRDFGSSSDRGGRSGGRDFGGRRGGASTSSRGGKRGGGRGGGGKRGRGR.

Positions 28-56 match the Q motif motif; it reads GGFESLNLGPNVFNAIKKKGYKVPTPIQR. The region spanning 59-232 is the Helicase ATP-binding domain; it reads MPLILSGVDV…KAGLREPQLV (174 aa). ATP is bound at residue 72–79; the sequence is ARTGSGKT. The DEAD box motif lies at 180–183; that stretch reads DEAD. Residues 256–411 form the Helicase C-terminal domain; sequence KYSALLYLVR…EVLKNMEEVM (156 aa). The segment at 675-845 is disordered; that stretch reads SGKIKTESGA…GGGGKRGRGR (171 aa). Composition is skewed to basic and acidic residues over residues 696 to 716 and 738 to 754; these read RWQERSHKKVSRDSGDADETT and VRSEIKDLDQVRKERQQ. Gly residues predominate over residues 770 to 799; that stretch reads GGRGGARGGRGGGARGGRGGSRDFGGGGRD. Over residues 806-817 the composition is skewed to basic and acidic residues; the sequence is RGGRSGGRDFGG. The segment covering 828 to 845 has biased composition (basic residues); the sequence is GGKRGGGRGGGGKRGRGR.

This sequence belongs to the DEAD box helicase family. DDX54/DBP10 subfamily.

It carries out the reaction ATP + H2O = ADP + phosphate + H(+). This Arabidopsis thaliana (Mouse-ear cress) protein is Putative DEAD-box ATP-dependent RNA helicase 29 (RH29).